Here is a 476-residue protein sequence, read N- to C-terminus: Protein EARLY HEADING DATE 2 (476 aa).

Residues 1–13 (MLLSDLSSDQEAT) are compositionally biased toward polar residues. Residues 1–27 (MLLSDLSSDQEATGSNSHGGGGGGDRM) form a disordered region. 2 consecutive C2H2-type zinc fingers follow at residues 106–128 (FVCE…RRGH) and 156–186 (YVCP…SRKH). 2 short sequence motifs (nuclear localization signal) span residues 124-131 (HRRGHNLP) and 178-185 (IKKHFSRK). The C2H2-type 2; degenerate zinc finger occupies 191–214 (WRCERCGKRYAVHSDWKAHVKNCG). Zn(2+) is bound by residues C193, C196, H209, C213, C220, C222, H235, and C239. The segment at 218–241 (YRCDCGILFSRKDSLLTHRAFCDA) adopts a CCHC-type 2; atypical zinc-finger fold. The interval 228–240 (RKDSLLTHRAFCD) is SHR-binding.

It is found in the nucleus. Its function is as follows. Transcription activator that acts as a flowering master switch in both long and short days, independently of the circadian clock. Promotes flowering upstream of HD1 by up-regulating FTL1, FTL4, FTL5, FTL6, EHD1, HD3A and RFT1. Seems to repress FTL11 expression. May recognize the consensus motif 5'-TTTGTCGTAAT-3' in target gene promoters. The polypeptide is Protein EARLY HEADING DATE 2 (Oryza sativa subsp. indica (Rice)).